The following is a 409-amino-acid chain: Accessory Sec system protein translocase subunit SecY2 (409 aa).

A run of 10 helical transmembrane segments spans residues 16 to 36, 61 to 81, 104 to 124, 132 to 152, 161 to 181, 190 to 210, 242 to 262, 286 to 306, 341 to 361, and 374 to 394; these read ILIT…PIPG, LSQV…MILL, VVML…FQYH, LLLA…IGNL, MTIL…PLIF, LAII…ITFE, GMAF…IILL, GVVI…FVNI, LFGT…LLFA, and TGIF…FQVI.

The protein belongs to the SecY/SEC61-alpha family. SecY2 subfamily. As to quaternary structure, component of the accessory SecA2/SecY2 protein translocase complex required to export cell wall proteins. May form heterotrimers with SecE and SecG subunits.

Its subcellular location is the cell membrane. Functionally, part of the accessory SecA2/SecY2 system specifically required for export of possible cell wall proteins. The central subunit of a protein translocation channel. This is Accessory Sec system protein translocase subunit SecY2 from Streptococcus agalactiae serotype Ia (strain ATCC 27591 / A909 / CDC SS700).